The primary structure comprises 339 residues: Cathepsin L-like peptidase (339 aa).

The N-terminal stretch at 1 to 16 is a signal peptide; the sequence is MKILILLVAFVAAANA. A propeptide spans 17-121 (activation peptide); that stretch reads VSLYELVKEE…VTFIEPANVE (105 aa). The N-linked (GlcNAc...) asparagine glycan is linked to Asn95. Intrachain disulfides connect Cys143/Cys186, Cys177/Cys219, and Cys278/Cys328. Cys146 is an active-site residue. Residues His285 and Asn306 contribute to the active site.

It belongs to the peptidase C1 family. As to quaternary structure, dimer of a heavy and a light chain linked by disulfide bonds. Interacts with cystatin; the interaction results in inhibition of cathepsin L-like peptidase activity. In terms of tissue distribution, salivary gland. Midgut.

It carries out the reaction Specificity close to that of papain. As compared to cathepsin B, cathepsin L exhibits higher activity toward protein substrates, but has little activity on Z-Arg-Arg-NHMec, and no peptidyl-dipeptidase activity.. Its activity is regulated as follows. More active in the presence of a reducing agent DTT. Its function is as follows. Proteinase exhibiting preference for Leu, Val and Phe residues at the P2 position. This is Cathepsin L-like peptidase from Aedes aegypti (Yellowfever mosquito).